Consider the following 355-residue polypeptide: Histidinol-phosphate aminotransferase 2 (355 aa).

K213 is subject to N6-(pyridoxal phosphate)lysine.

It belongs to the class-II pyridoxal-phosphate-dependent aminotransferase family. Histidinol-phosphate aminotransferase subfamily. In terms of assembly, homodimer. The cofactor is pyridoxal 5'-phosphate.

It carries out the reaction L-histidinol phosphate + 2-oxoglutarate = 3-(imidazol-4-yl)-2-oxopropyl phosphate + L-glutamate. It participates in amino-acid biosynthesis; L-histidine biosynthesis; L-histidine from 5-phospho-alpha-D-ribose 1-diphosphate: step 7/9. This is Histidinol-phosphate aminotransferase 2 from Burkholderia lata (strain ATCC 17760 / DSM 23089 / LMG 22485 / NCIMB 9086 / R18194 / 383).